A 274-amino-acid polypeptide reads, in one-letter code: Receptor-like protein 44 (274 aa).

An N-terminal signal peptide occupies residues methionine 1–alanine 24. At aspartate 25–lysine 223 the chain is on the extracellular side. Residues asparagine 48, asparagine 82, and asparagine 95 are each glycosylated (N-linked (GlcNAc...) asparagine). LRR repeat units follow at residues cysteine 96–valine 121, leucine 123–cysteine 144, alanine 145–leucine 168, and alanine 169–arginine 192. Asparagine 127 carries N-linked (GlcNAc...) asparagine glycosylation. Residues asparagine 191 and asparagine 200 are each glycosylated (N-linked (GlcNAc...) asparagine). A helical transmembrane segment spans residues glycine 224–isoleucine 244. Residues serine 245 to tyrosine 274 are Cytoplasmic-facing.

The protein belongs to the RLP family.

It localises to the cell membrane. This chain is Receptor-like protein 44, found in Arabidopsis thaliana (Mouse-ear cress).